Here is a 243-residue protein sequence, read N- to C-terminus: Probable transcriptional regulatory protein BDI_1233 (243 aa).

The protein belongs to the TACO1 family.

It is found in the cytoplasm. The polypeptide is Probable transcriptional regulatory protein BDI_1233 (Parabacteroides distasonis (strain ATCC 8503 / DSM 20701 / CIP 104284 / JCM 5825 / NCTC 11152)).